The following is a 510-amino-acid chain: ATP synthase subunit alpha (510 aa).

Residue 170-177 coordinates ATP; that stretch reads GDRQTGKT.

The protein belongs to the ATPase alpha/beta chains family. F-type ATPases have 2 components, CF(1) - the catalytic core - and CF(0) - the membrane proton channel. CF(1) has five subunits: alpha(3), beta(3), gamma(1), delta(1), epsilon(1). CF(0) has three main subunits: a(1), b(2) and c(9-12). The alpha and beta chains form an alternating ring which encloses part of the gamma chain. CF(1) is attached to CF(0) by a central stalk formed by the gamma and epsilon chains, while a peripheral stalk is formed by the delta and b chains.

The protein resides in the cell inner membrane. It catalyses the reaction ATP + H2O + 4 H(+)(in) = ADP + phosphate + 5 H(+)(out). Its function is as follows. Produces ATP from ADP in the presence of a proton gradient across the membrane. The alpha chain is a regulatory subunit. The sequence is that of ATP synthase subunit alpha from Caulobacter sp. (strain K31).